A 346-amino-acid chain; its full sequence is c-di-GMP synthase (346 aa).

It belongs to the CD-NTase family.

The catalysed reaction is 2 GTP = 3',3'-c-di-GMP + 2 diphosphate. Cyclic nucleotide synthase (second messenger synthase) of a CBASS antivirus system. CBASS (cyclic oligonucleotide-based antiphage signaling system) provides immunity against bacteriophage. The CD-NTase protein synthesizes cyclic nucleotides in response to infection; these serve as specific second messenger signals. The signals activate a diverse range of effectors, leading to bacterial cell death and thus abortive phage infection. A type I-D(GG) CBASS system. Its function is as follows. Cyclic dinucleotide synthase that catalyzes the synthesis of c-di-GMP, has no activity with other NTP substrates. The polypeptide is c-di-GMP synthase (Lachnospiraceae bacterium (strain RUG226)).